Consider the following 210-residue polypeptide: Guanylate kinase (210 aa).

The Guanylate kinase-like domain occupies 5–183; that stretch reads GILFVISAPS…AVEEFKSIIL (179 aa). 12-19 contributes to the ATP binding site; sequence APSGAGKT.

This sequence belongs to the guanylate kinase family.

Its subcellular location is the cytoplasm. It catalyses the reaction GMP + ATP = GDP + ADP. Its function is as follows. Essential for recycling GMP and indirectly, cGMP. The protein is Guanylate kinase of Syntrophotalea carbinolica (strain DSM 2380 / NBRC 103641 / GraBd1) (Pelobacter carbinolicus).